The following is a 278-amino-acid chain: Cytoplasmic envelopment protein 1 (278 aa).

The protein belongs to the herpesviridae cytoplasmic envelopment protein 1 family. As to quaternary structure, interacts with BSRF1 tegument protein; the BBRF2-BSRF1 complexes oligomerize and might play a role in tethering the viral nucleocapsids to the host Golgi membrane during secondary envelopment.

It localises to the virion. The protein resides in the virion tegument. It is found in the host cytoplasm. The protein localises to the host Golgi apparatus. Its function is as follows. Plays a critical role in cytoplasmic virus egress. Participates in the final step of tegumentation and envelope acquisition within the host cytoplasm. The chain is Cytoplasmic envelopment protein 1 from Homo sapiens (Human).